Here is a 546-residue protein sequence, read N- to C-terminus: ATP-dependent RNA helicase DBP2 (546 aa).

A disordered region spans residues 1-56 (MTYGGRDQQYNKTNYKSRGGDFRGGRNSDRNSYNDRPQGGNYRGGFGGRSNYNQPQ). Omega-N-methylarginine occurs at positions 18 and 43. Residues 18–33 (RGGDFRGGRNSDRNSY) are compositionally biased toward basic and acidic residues. S88 and S90 each carry phosphoserine. The Q motif motif lies at 113–141 (TTFDEAGFPDYVLNEVKAEGFDKPTGIQC). A Helicase ATP-binding domain is found at 144–319 (WPMALSGRDM…ADYLNDPIQV (176 aa)). 157 to 164 (AATGSGKT) contacts ATP. The short motif at 267 to 270 (DEAD) is the DEAD box element. Positions 347–494 (RLNKYLETAS…NIPPELLKYD (148 aa)) constitute a Helicase C-terminal domain. Residue K474 forms a Glycyl lysine isopeptide (Lys-Gly) (interchain with G-Cter in ubiquitin) linkage. Residues 493–546 (YDRRSYGGGHPRYGGGRGGRGGYGRRGGYGGGRGGYGGNRQRDGGWGNRGRSNY) form a disordered region. The span at 498–540 (YGGGHPRYGGGRGGRGGYGRRGGYGGGRGGYGGNRQRDGGWGN) shows a compositional bias: gly residues. Residues 505–530 (YGGGRGGRGGYGRRGGYGGGRGGYGG) form an RNA-binding RGG-box region. Dimethylated arginine; alternate is present on residues R509, R512, R518, and R525. Residues R509, R512, R518, and R525 each carry the omega-N-methylarginine; alternate modification.

Belongs to the DEAD box helicase family. DDX5/DBP2 subfamily. In terms of assembly, interacts with UPF1. Associates with polysomes.

The protein localises to the cytoplasm. It localises to the nucleus. The enzyme catalyses ATP + H2O = ADP + phosphate + H(+). ATP-dependent RNA helicase involved nonsense-mediated mRNA decay and ribosome biogenesis through rRNA processing. Associates directly with chromatin, correlating with transcriptional activity. Required for assembly of mRNA-binding proteins YRA1, NAB2, and MEX67 onto poly(A)+ RNA. This Saccharomyces cerevisiae (strain ATCC 204508 / S288c) (Baker's yeast) protein is ATP-dependent RNA helicase DBP2.